We begin with the raw amino-acid sequence, 252 residues long: Major prion protein (252 aa).

A signal peptide spans 1–22 (MANLGYWMLVLFVATWSDLGLC). Residues 23 to 229 (KKRPKPGGWN…ESQAYYQRGS (207 aa)) form an interaction with GRB2, ERI3 and SYN1 region. A disordered region spans residues 26–104 (PKPGGWNTGG…HNQWNKPSKP (79 aa)). 5 consecutive repeat copies span residues 51 to 58 (PQGGGWGQ), 59 to 66 (PHGGGWGQ), 67 to 74 (PHGGGWGQ), 75 to 82 (PHGGGWGQ), and 83 to 90 (PHGGGWGQ). The tract at residues 51 to 90 (PQGGGWGQPHGGGWGQPHGGGWGQPHGGGWGQPHGGGWGQ) is 5 X 8 AA tandem repeats of P-H-G-G-G-W-G-Q. A compositionally biased stretch (gly residues) spans 52 to 92 (QGGGWGQPHGGGWGQPHGGGWGQPHGGGWGQPHGGGWGQAG). Cu(2+) is bound by residues histidine 60, glycine 61, glycine 62, histidine 68, glycine 69, glycine 70, histidine 76, glycine 77, glycine 78, histidine 84, glycine 85, and glycine 86. Cysteine 178 and cysteine 213 are oxidised to a cystine. N-linked (GlcNAc...) asparagine glycosylation is found at asparagine 180 and asparagine 196. Serine 229 carries the GPI-anchor amidated serine lipid modification. The propeptide at 230 to 252 (SMVLFSSPPVILLISFLIFLIVG) is removed in mature form.

Belongs to the prion family. Monomer and homodimer. Has a tendency to aggregate into amyloid fibrils containing a cross-beta spine, formed by a steric zipper of superposed beta-strands. Soluble oligomers may represent an intermediate stage on the path to fibril formation. Copper binding may promote oligomerization. Interacts with GRB2, APP, ERI3/PRNPIP and SYN1. Mislocalized cytosolically exposed PrP interacts with MGRN1; this interaction alters MGRN1 subcellular location and causes lysosomal enlargement. Interacts with KIAA1191.

Its subcellular location is the cell membrane. The protein resides in the golgi apparatus. Its function is as follows. Its primary physiological function is unclear. Has cytoprotective activity against internal or environmental stresses. May play a role in neuronal development and synaptic plasticity. May be required for neuronal myelin sheath maintenance. May play a role in iron uptake and iron homeostasis. Soluble oligomers are toxic to cultured neuroblastoma cells and induce apoptosis (in vitro). Association with GPC1 (via its heparan sulfate chains) targets PRNP to lipid rafts. Also provides Cu(2+) or Zn(2+) for the ascorbate-mediated GPC1 deaminase degradation of its heparan sulfate side chains. This is Major prion protein (PRNP) from Ateles paniscus (Black spider monkey).